The chain runs to 326 residues: tRNA-modifying protein YgfZ (326 aa).

Residues Trp-27 and Trp-189 each contribute to the folate site.

Belongs to the tRNA-modifying YgfZ family.

The protein localises to the cytoplasm. Folate-binding protein involved in regulating the level of ATP-DnaA and in the modification of some tRNAs. It is probably a key factor in regulatory networks that act via tRNA modification, such as initiation of chromosomal replication. This Salmonella arizonae (strain ATCC BAA-731 / CDC346-86 / RSK2980) protein is tRNA-modifying protein YgfZ.